A 702-amino-acid chain; its full sequence is BRCA1-associated RING domain protein 1 (702 aa).

The segment at 18-67 (CVKCKKPRGDLQYLGSSCKHAYCWECIATFQQKPSGKRSSVARHMCPSCA) adopts an RING-type zinc-finger fold. Disordered regions lie at residues 153–205 (DENR…TSVK) and 281–346 (ASMS…YGTR). The segment covering 174-188 (ASPTRNSTKRPSTVS) has biased composition (polar residues). Residues 312–321 (IKSDKIERRS) show a composition bias toward basic and acidic residues. 3 ANK repeats span residues 347 to 376 (RGEA…CVNE), 379 to 408 (DGKT…VINA), and 413 to 442 (TLET…SIKI). Residues 601-702 (MQPKLFAGCK…LGCSITTPPH (102 aa)) enclose the BRCT domain.

As to quaternary structure, heterodimer (via RING-type zinc finger) with brc-1 to form the core CeBCD complex. Brc-1-brd-1 heterodimer-containing CeBCD complexes bound to chromatin are activated as an E3-ubiquitin ligase in response to DNA damage. The heterodimer interacts with the recombinase rad-51 following ionizing irradiation; the interaction is direct. The heterodimer interacts the E2-ubiquitin-conjugating enzyme let-70 following ionizing irradiation. The heterodimer interacts with the pro-crossover proteins msh-5 and syp-3. Interacts with smt-3, tac-1 and ubc-9. Autoubiquitinated. In terms of processing, phosphorylation of CeBCD complexes is required for E3 ubiquitin-protein ligase activity.

It localises to the cytoplasm. It is found in the nucleus. The protein localises to the chromosome. It carries out the reaction S-ubiquitinyl-[E2 ubiquitin-conjugating enzyme]-L-cysteine + [acceptor protein]-L-lysine = [E2 ubiquitin-conjugating enzyme]-L-cysteine + N(6)-ubiquitinyl-[acceptor protein]-L-lysine.. It functions in the pathway protein modification; protein ubiquitination. Its activity is regulated as follows. E3 ubiquitin-protein ligase activity of CeBCD complexes occurs at DNA damage sites. Following DNA damage, E3 ubiquitin-protein ligase activity is reduced by caffeine treatment (inhibitor of ATM and ATK kinase activity). Functionally, constituent of the CeBCD complex that possesses E3 ubiquitin-protein ligase activity. When bound to chromatin, the brc-1-brd-1 heterodimer within the CeBCD complex is inactive during normal conditions, but in response to DNA damage, the brc-1-brd-1 heterodimer associates with other proteins such as the recombinase rad-51 or the E2-ubiquitin-conjugating enzyme let-70, which activate the CeBCD complex as an E3-ubiquitin ligase. Moreover, association between the brc-1-brd-1 heterodimer and rad-51 and let-70, probably requires DNA checkpoint proteins such as atl-1 and mre-11 in order to induce ubiquitination at DNA damage sites. To this end, the brc-1-brd-1 heterodimer coordinates a diverse range of cellular pathways such as DNA damage repair, ubiquitination and transcriptional regulation to maintain genomic stability. Plays a role in triggering cellular responses at damage sites in response to DNA damage that may be induced by ionizing radiation for example. In particular, protects against chromosome non-disjunction and nuclear fragmentation during meiotic double-strand break repair to ensure sister chromatid recombination and aid chromosome stability. The polypeptide is BRCA1-associated RING domain protein 1 (Caenorhabditis elegans).